Reading from the N-terminus, the 669-residue chain is Alpha-1,6-mannosylglycoprotein 6-beta-N-acetylglucosaminyltransferase (669 aa).

The Cytoplasmic portion of the chain corresponds to M1–C7. Residues V8 to I28 traverse the membrane as a helical; Signal-anchor for type II membrane protein segment. The Lumenal segment spans residues S29–L669. N-linked (GlcNAc...) asparagine glycans are attached at residues N30, N412, N437, and N626.

This sequence belongs to the glycosyltransferase 18 family. In terms of tissue distribution, expressed in a complex subset of neurons in larvae and in the spermathecal and pharyngeal-intestinal valves and certain vulval cells of adults.

The protein resides in the golgi apparatus membrane. It carries out the reaction N(4)-{beta-D-GlcNAc-(1-&gt;2)-[beta-D-GlcNAc-(1-&gt;4)]-alpha-D-Man-(1-&gt;3)-[beta-D-GlcNAc-(1-&gt;2)-alpha-D-Man-(1-&gt;6)]-beta-D-Man-(1-&gt;4)-beta-D-GlcNAc-(1-&gt;4)-beta-D-GlcNAc}-L-asparaginyl-[protein] + UDP-N-acetyl-alpha-D-glucosamine = N(4)-{beta-D-GlcNAc-(1-&gt;2)-[beta-D-GlcNAc-(1-&gt;4)]-alpha-D-Man-(1-&gt;3)-[beta-D-GlcNAc-(1-&gt;2)-[beta-D-GlcNAc-(1-&gt;6)]-alpha-D-Man-(1-&gt;6)]-beta-D-Man-(1-&gt;4)-beta-D-GlcNAc-(1-&gt;4)-beta-D-GlcNAc}-L-asparaginyl-[protein] + UDP + H(+). It functions in the pathway protein modification; protein glycosylation. Catalyzes the addition of N-acetylglucosamine (GlcNAc) in beta 1-6 linkage to the alpha-linked mannose of biantennary N-linked oligosaccharides. In Caenorhabditis elegans, this protein is Alpha-1,6-mannosylglycoprotein 6-beta-N-acetylglucosaminyltransferase (gly-2).